A 318-amino-acid polypeptide reads, in one-letter code: Homoserine kinase (318 aa).

Residue proline 97–cysteine 107 coordinates ATP.

It belongs to the GHMP kinase family. Homoserine kinase subfamily.

The protein resides in the cytoplasm. The enzyme catalyses L-homoserine + ATP = O-phospho-L-homoserine + ADP + H(+). Its pathway is amino-acid biosynthesis; L-threonine biosynthesis; L-threonine from L-aspartate: step 4/5. Functionally, catalyzes the ATP-dependent phosphorylation of L-homoserine to L-homoserine phosphate. This is Homoserine kinase from Photobacterium profundum (strain SS9).